Here is a 208-residue protein sequence, read N- to C-terminus: Probable transcriptional regulator ycf29 (208 aa).

Residues 11–118 (KLILIEPEEH…ELIAIISNLI (108 aa)) enclose the Response regulatory domain. Aspartate 60 carries the post-translational modification 4-aspartylphosphate. The HTH luxR-type domain maps to 146–208 (TSFSYINLTV…NRIQILSYFN (63 aa)).

It localises to the plastid. It is found in the chloroplast. The protein is Probable transcriptional regulator ycf29 (ycf29) of Guillardia theta (Cryptophyte).